The chain runs to 373 residues: NAD(P)H-quinone oxidoreductase subunit 1 (373 aa).

8 helical membrane passes run L28–V48, L98–I118, V129–M149, A167–M187, I205–L225, V267–V287, S309–L329, and F348–P368.

This sequence belongs to the complex I subunit 1 family. In terms of assembly, NDH-1 is composed of at least 11 different subunits.

The protein localises to the cellular thylakoid membrane. It catalyses the reaction a plastoquinone + NADH + (n+1) H(+)(in) = a plastoquinol + NAD(+) + n H(+)(out). It carries out the reaction a plastoquinone + NADPH + (n+1) H(+)(in) = a plastoquinol + NADP(+) + n H(+)(out). Functionally, NDH-1 shuttles electrons from an unknown electron donor, via FMN and iron-sulfur (Fe-S) centers, to quinones in the respiratory and/or the photosynthetic chain. The immediate electron acceptor for the enzyme in this species is believed to be plastoquinone. Couples the redox reaction to proton translocation, and thus conserves the redox energy in a proton gradient. The chain is NAD(P)H-quinone oxidoreductase subunit 1 from Parasynechococcus marenigrum (strain WH8102).